We begin with the raw amino-acid sequence, 153 residues long: Ubiquitin-conjugating enzyme E2 35 (153 aa).

Residues 5–151 (NLPRRIIKET…AKEWTRLYAS (147 aa)) form the UBC core domain. Cys-89 (glycyl thioester intermediate) is an active-site residue.

Belongs to the ubiquitin-conjugating enzyme family. In terms of assembly, interacts with yeast and human Mms2, with the RING domain of RGLG2 and with UEV1A, UEV1B, UEV1C and UEV1D. As to expression, ubiquitously expressed at low level. Mainly expressed in the vasculature.

It carries out the reaction S-ubiquitinyl-[E1 ubiquitin-activating enzyme]-L-cysteine + [E2 ubiquitin-conjugating enzyme]-L-cysteine = [E1 ubiquitin-activating enzyme]-L-cysteine + S-ubiquitinyl-[E2 ubiquitin-conjugating enzyme]-L-cysteine.. Its pathway is protein modification; protein ubiquitination. In terms of biological role, catalyzes the synthesis of non-canonical poly-ubiquitin chains that are linked through 'Lys-63'. This type of poly-ubiquitination does not lead to protein degradation by the proteasome. Mediates transcriptional activation of target genes. Required for postreplication repair of UV-damaged DNA and for adapting root developmental programs to suboptimal availability of iron. The chain is Ubiquitin-conjugating enzyme E2 35 (UBC35) from Arabidopsis thaliana (Mouse-ear cress).